We begin with the raw amino-acid sequence, 112 residues long: Nitrogen regulatory protein P-II (112 aa).

Tyr51 carries the O-UMP-tyrosine modification.

The protein belongs to the P(II) protein family. As to quaternary structure, homotrimer.

P-II indirectly controls the transcription of the glutamine synthetase gene (glnA). P-II prevents NR-II-catalyzed conversion of NR-I to NR-I-phosphate, the transcriptional activator of glnA. When P-II is uridylylated to P-II-UMP, these events are reversed. When the ratio of Gln to 2-ketoglutarate decreases, P-II is uridylylated to P-II-UMP, which causes the deadenylation of glutamine synthetase, so activating the enzyme. The polypeptide is Nitrogen regulatory protein P-II (glnB) (Rhodobacter capsulatus (Rhodopseudomonas capsulata)).